The chain runs to 758 residues: Glucocorticoid receptor (758 aa).

2 disordered regions span residues 1–61 (MDPG…SANG) and 349–382 (GMSS…PSGP). The tract at residues 1-386 (MDPGGLKHSK…AKPSGPTHKI (386 aa)) is modulating. Residues 26 to 42 (GSFSGDTGGSKSTTSTS) show a composition bias toward low complexity. 2 NR C4-type zinc fingers span residues 387–407 (CLVC…CGSC) and 432–456 (CAGR…FRKC). Residues 387 to 461 (CLVCSDEASG…RFRKCLQAGM (75 aa)) constitute a DNA-binding region (nuclear receptor). Positions 462–498 (NLEARKNKKLIRLKGQQTTMEPNPPPPDERACALIPK) are hinge. The NR LBD domain maps to 499 to 733 (SMPQLVPTML…FPEMLAEIIS (235 aa)).

This sequence belongs to the nuclear hormone receptor family. NR3 subfamily. As to quaternary structure, heteromultimeric cytoplasmic complex with HSP90AA1, HSPA1A/HSPA1B, and FKBP5 or another immunophilin such as PPID, STIP1, or the immunophilin homolog PPP5C. Upon ligand binding FKBP5 dissociates from the complex and FKBP4 takes its place, thereby linking the complex to dynein and mediating transport to the nucleus, where the complex dissociates. Directly interacts with UNC45A. Binds to DNA as a homodimer, and as heterodimer with NR3C2 or the retinoid X receptor. Binds STAT5A and STAT5B homodimers and heterodimers. Interacts with NRIP1, POU2F1, POU2F2 and TRIM28. Interacts with several coactivator complexes, including the SMARCA4 complex, CREBBP/EP300, TADA2L (Ada complex) and p160 coactivators such as NCOA2 and NCOA6. Interaction with BAG1 inhibits transactivation. Interacts with HEXIM1, PELP1 and TGFB1I1. Interacts with NCOA1, NCOA3, SMARCA4, SMARCC1, SMARCD1, and SMARCE1. Post-translationally, phosphorylated in the absence of hormone; becomes hyperphosphorylated in the presence of glucocorticoids. May be dephosphorylated by PPP5C, attenuates NR3C1 action. Isoform 1 is expressed in all tissues tested including liver, gills, intestine, skeletal muscle, kidney, heart, spleen, stomach, brain, pituitary, ovary, testis, skin and bladder. Isoform 2 is found only in testis.

The protein localises to the cytoplasm. Its subcellular location is the nucleus. It localises to the mitochondrion. The protein resides in the cytoskeleton. It is found in the spindle. The protein localises to the microtubule organizing center. Its subcellular location is the centrosome. Its function is as follows. Receptor for glucocorticoids (GC). Has a dual mode of action: as a transcription factor that binds to glucocorticoid response elements (GRE), both for nuclear and mitochondrial DNA, and as a modulator of other transcription factors. Affects inflammatory responses, cellular proliferation and differentiation in target tissues. Involved in chromatin remodeling. Plays a role in rapid mRNA degradation by binding to the 5' UTR of target mRNAs and interacting with PNRC2 in a ligand-dependent manner which recruits the RNA helicase UPF1 and the mRNA-decapping enzyme DCP1A, leading to RNA decay. Could act as a coactivator for STAT5-dependent transcription upon growth hormone (GH) stimulation and could reveal an essential role of hepatic GR in the control of body growth. Mediates glucocorticoid-induced apoptosis. Promotes accurate chromosome segregation during mitosis. May act as a tumor suppressor. May play a negative role in adipogenesis through the regulation of lipolytic and antilipogenic gene expression. The chain is Glucocorticoid receptor (nr3c1) from Oncorhynchus mykiss (Rainbow trout).